The sequence spans 157 residues: Ribonuclease H (157 aa).

Positions 5–146 constitute an RNase H type-1 domain; that stretch reads IMKQVEIFTD…CDDLARTAAE (142 aa). Mg(2+)-binding residues include D14, E52, D74, and D138.

It belongs to the RNase H family. Monomer. Mg(2+) is required as a cofactor.

It localises to the cytoplasm. The enzyme catalyses Endonucleolytic cleavage to 5'-phosphomonoester.. In terms of biological role, endonuclease that specifically degrades the RNA of RNA-DNA hybrids. This is Ribonuclease H from Aliivibrio salmonicida (strain LFI1238) (Vibrio salmonicida (strain LFI1238)).